The primary structure comprises 92 residues: Large ribosomal subunit protein bL25 (92 aa).

The protein belongs to the bacterial ribosomal protein bL25 family. As to quaternary structure, part of the 50S ribosomal subunit; part of the 5S rRNA/L5/L18/L25 subcomplex. Contacts the 5S rRNA. Binds to the 5S rRNA independently of L5 and L18.

Functionally, this is one of the proteins that binds to the 5S RNA in the ribosome where it forms part of the central protuberance. The chain is Large ribosomal subunit protein bL25 from Aliivibrio fischeri (strain MJ11) (Vibrio fischeri).